The sequence spans 216 residues: NADH-quinone oxidoreductase subunit C (216 aa).

This sequence belongs to the complex I 30 kDa subunit family. In terms of assembly, NDH-1 is composed of 14 different subunits. Subunits NuoB, C, D, E, F, and G constitute the peripheral sector of the complex.

Its subcellular location is the cell inner membrane. It catalyses the reaction a quinone + NADH + 5 H(+)(in) = a quinol + NAD(+) + 4 H(+)(out). Its function is as follows. NDH-1 shuttles electrons from NADH, via FMN and iron-sulfur (Fe-S) centers, to quinones in the respiratory chain. The immediate electron acceptor for the enzyme in this species is believed to be ubiquinone. Couples the redox reaction to proton translocation (for every two electrons transferred, four hydrogen ions are translocated across the cytoplasmic membrane), and thus conserves the redox energy in a proton gradient. The polypeptide is NADH-quinone oxidoreductase subunit C (Francisella tularensis subsp. tularensis (strain FSC 198)).